A 906-amino-acid chain; its full sequence is Gamma-tubulin complex component 3 homolog (906 aa).

Positions 208 to 229 (GQQPSQQSTTTKGLPNTVSRNV) are enriched in polar residues. The segment at 208-242 (GQQPSQQSTTTKGLPNTVSRNVPRTRREGDSSGSV) is disordered.

Belongs to the TUBGCP family. In terms of assembly, interacts with gamma-tubulin.

It is found in the cytoplasm. Its subcellular location is the cytoskeleton. The protein resides in the microtubule organizing center. The protein localises to the centrosome. Its function is as follows. Necessary for the recruitment of gamma-tubulin to the centrosome and for the formation of a functional centrosome. This Xenopus laevis (African clawed frog) protein is Gamma-tubulin complex component 3 homolog (tubgcp3).